An 81-amino-acid polypeptide reads, in one-letter code: RNA-binding protein Hfq (81 aa).

In terms of domain architecture, Sm spans 11 to 71; it reads DIFLNNARKN…ISTITPTKPI (61 aa).

The protein belongs to the Hfq family. In terms of assembly, homohexamer.

In terms of biological role, RNA chaperone that binds small regulatory RNA (sRNAs) and mRNAs to facilitate mRNA translational regulation in response to envelope stress, environmental stress and changes in metabolite concentrations. Also binds with high specificity to tRNAs. The protein is RNA-binding protein Hfq of Clostridium beijerinckii (strain ATCC 51743 / NCIMB 8052) (Clostridium acetobutylicum).